The sequence spans 222 residues: Ribose-5-phosphate isomerase A (222 aa).

Substrate contacts are provided by residues threonine 29–threonine 32, aspartate 82–aspartate 85, and lysine 95–glycine 98. The Proton acceptor role is filled by glutamate 104. Position 122 (lysine 122) interacts with substrate.

This sequence belongs to the ribose 5-phosphate isomerase family. Homodimer.

The enzyme catalyses aldehydo-D-ribose 5-phosphate = D-ribulose 5-phosphate. The protein operates within carbohydrate degradation; pentose phosphate pathway; D-ribose 5-phosphate from D-ribulose 5-phosphate (non-oxidative stage): step 1/1. Functionally, catalyzes the reversible conversion of ribose-5-phosphate to ribulose 5-phosphate. This chain is Ribose-5-phosphate isomerase A, found in Blochmanniella floridana.